An 880-amino-acid chain; its full sequence is Interference hedgehog (880 aa).

The first 20 residues, 1-20 (MTLLTSSLLFFSLLTSRLEA), serve as a signal peptide directing secretion. The Extracellular segment spans residues 21-703 (IPVLEKSPAH…ETFNMSPMLT (683 aa)). 4 consecutive Ig-like C2-type domains span residues 45–142 (PGVR…IARL), 132–234 (PLVV…IQLT), 252–340 (PHLL…YIKV), and 346–432 (PQIV…LQVN). 4 disulfide bridges follow: Cys68/Cys126, Cys173/Cys220, Cys276/Cys324, and Cys367/Cys414. N-linked (GlcNAc...) asparagine glycans are attached at residues Asn102 and Asn209. The segment at 426-467 (GTLLQVNPKQIQEPRESGGTHRPKPNQGSKQKQMYPPTPPNV) is disordered. Fibronectin type-III domains follow at residues 461 to 567 (PPTP…LQPG) and 575 to 670 (VPEL…TQRP). The N-linked (GlcNAc...) asparagine glycan is linked to Asn466. Heparin-binding residues include Arg497, Lys501, Lys503, and Arg541. N-linked (GlcNAc...) asparagine glycosylation is present at Asn557. Residues 662–697 (LKQGRTQRPKTSTTEEPTLQMGDRDTTTPSHNETFN) are disordered. Composition is skewed to polar residues over residues 665–678 (GRTQ…TEEP) and 688–697 (TTPSHNETFN). Residue Asn693 is glycosylated (N-linked (GlcNAc...) asparagine). A helical membrane pass occupies residues 704-724 (GTIGGGAVLILLLISTCLCVC). The Cytoplasmic portion of the chain corresponds to 725–880 (RRRSSRSRGN…SSGSLNSVGV (156 aa)). 2 disordered regions span residues 728–762 (SSRS…QRQR) and 775–880 (QQQQ…SVGV). 2 stretches are compositionally biased toward low complexity: residues 823-837 (RAGG…NNNN) and 864-880 (SSRS…SVGV).

The protein belongs to the immunoglobulin superfamily. IHOG family. As to quaternary structure, homodimer. Heterotetramer; 2 iHog chains bind 2 hh chains when facilitated by heparin, heparin is required to promote high-affinity interactions between hh and iHog.

The protein resides in the membrane. Mediates response to the active Hedgehog (Hh) protein signal in embryos, functioning upstream or at the level of patched (ptc). The sequence is that of Interference hedgehog from Drosophila yakuba (Fruit fly).